Consider the following 372-residue polypeptide: Anhydro-N-acetylmuramic acid kinase (372 aa).

18–25 lines the ATP pocket; that stretch reads GTSLDGID.

Belongs to the anhydro-N-acetylmuramic acid kinase family.

It carries out the reaction 1,6-anhydro-N-acetyl-beta-muramate + ATP + H2O = N-acetyl-D-muramate 6-phosphate + ADP + H(+). Its pathway is amino-sugar metabolism; 1,6-anhydro-N-acetylmuramate degradation. It functions in the pathway cell wall biogenesis; peptidoglycan recycling. Functionally, catalyzes the specific phosphorylation of 1,6-anhydro-N-acetylmuramic acid (anhMurNAc) with the simultaneous cleavage of the 1,6-anhydro ring, generating MurNAc-6-P. Is required for the utilization of anhMurNAc either imported from the medium or derived from its own cell wall murein, and thus plays a role in cell wall recycling. The chain is Anhydro-N-acetylmuramic acid kinase from Thiobacillus denitrificans (strain ATCC 25259 / T1).